A 943-amino-acid polypeptide reads, in one-letter code: MLKLLLGDPNTRKLKRYQPIVEEINFLEEEISQLTDDELRKETQNLKSNISAELDFKKQKELLEEFLPKAFAIVREASKRVLDMRHFDVQLIGGMVLNECQIAEMKTGEGKTLVATLPCYLNALTGKGVHVVTVNDYLARRDAEWMGQVHRFLGLSVGLIQQDMNPVERKKNYDCDITYATNSELGFDYLRDNMATDISEVVQRKFNYCVIDEVDSILIDEARTPLIISGQVERPQEKYQKAAELSLALIKAKELSKDGIDPEGDYEVDEKQRSCILTDQGFAKCEEYLGVNDLYNPQDPWAHYITNALKAKELFIKDVNYIIKNEEAVIVDEFTGRVMPGRRWSDGQHQAIEAKESLKIQPETQTLASITYQNFFLLYPGLAGMTGTAKTEEVEFEKTYKLESTVIPTNQIRKRQDWSDQVFKTEIGKWKAVAKETAKIHRDGRPVLVGTTSVEKSELLSSLLSAEKIPHNLLNAKPENVEREAEIVAQAGRAGAVTIATNMAGRGTDIILGGNSDYMARLKLKEILIPLLVKPDNEHKPPIPKQRNSKSKGGFSRKAGSNLKKKISNSSTNLFPCKLDEVIEKKLSLLSDELVKNWGDKQLSVLELDDRIATAAEKAPTDDKLIRLLRESLSDVKNEYEKVLIHEEEKVREAGGLHVIGTERHESRRVDNQLRGRAGRQGDLGSTRFFLSLDDNLLRIFGGDRVANLMNAFRVDEDMPIESGMLTRSLESAQKKVETYYYDIRKQVFEYDEVMNNQRKAVYGERLRVLKGIDLKRQVIGYGERTMIEIVDAYINPDLPPEEWNIEQLISKVKEFIYLLDDLKVEDINLLSIEELKNYLQEQLRIAYDLKESQIDKIRPGLMREAERFFILQQIDNLWREHLQSMDSLRESVGLRGYGQKDPLIEYKNEGYDMFLEMMTNMRRNVIYSMFMFQPKTDKNDKN.

ATP contacts are provided by residues Gln90, 108–112 (GEGKT), and Asp509. The interval 535-562 (PDNEHKPPIPKQRNSKSKGGFSRKAGSN) is disordered.

It belongs to the SecA family. Monomer and homodimer. Part of the essential Sec protein translocation apparatus which comprises SecA, SecYEG and auxiliary proteins SecDF. Other proteins may also be involved.

Its subcellular location is the cell inner membrane. The protein localises to the cellular thylakoid membrane. The protein resides in the cytoplasm. The catalysed reaction is ATP + H2O + cellular proteinSide 1 = ADP + phosphate + cellular proteinSide 2.. Functionally, part of the Sec protein translocase complex. Interacts with the SecYEG preprotein conducting channel. Has a central role in coupling the hydrolysis of ATP to the transfer of proteins into and across the cell membrane, serving as an ATP-driven molecular motor driving the stepwise translocation of polypeptide chains across the membrane. Probably participates in protein translocation into and across both the cytoplasmic and thylakoid membranes in cyanobacterial cells. The protein is Protein translocase subunit SecA of Prochlorococcus marinus (strain AS9601).